Consider the following 154-residue polypeptide: Cytochrome c-type biogenesis protein CcmE (154 aa).

Residues 1–8 lie on the Cytoplasmic side of the membrane; that stretch reads MHPQRKQR. The helical; Signal-anchor for type II membrane protein transmembrane segment at 9–29 threads the bilayer; that stretch reads LMIVLFIVVFSSLAVGLIAYA. Residues 30–154 lie on the Periplasmic side of the membrane; the sequence is LRENINLFYP…ATCGGLNYGA (125 aa). Residues H124 and Y128 each contribute to the heme site.

Belongs to the CcmE/CycJ family.

It is found in the cell inner membrane. Heme chaperone required for the biogenesis of c-type cytochromes. Transiently binds heme delivered by CcmC and transfers the heme to apo-cytochromes in a process facilitated by CcmF and CcmH. The chain is Cytochrome c-type biogenesis protein CcmE from Cellvibrio japonicus (strain Ueda107) (Pseudomonas fluorescens subsp. cellulosa).